The following is a 57-amino-acid chain: Large ribosomal subunit protein bL33 (57 aa).

The protein belongs to the bacterial ribosomal protein bL33 family.

This chain is Large ribosomal subunit protein bL33, found in Shewanella sp. (strain MR-4).